The sequence spans 272 residues: D-aminoacyl-tRNA deacylase (272 aa).

Belongs to the DtdA deacylase family. In terms of assembly, monomer. Zn(2+) serves as cofactor.

It carries out the reaction a D-aminoacyl-tRNA + H2O = a tRNA + a D-alpha-amino acid + H(+). The enzyme catalyses glycyl-tRNA(Ala) + H2O = tRNA(Ala) + glycine + H(+). In terms of biological role, D-aminoacyl-tRNA deacylase with broad substrate specificity. By recycling D-aminoacyl-tRNA to D-amino acids and free tRNA molecules, this enzyme counteracts the toxicity associated with the formation of D-aminoacyl-tRNA entities in vivo. This Desulfurococcus amylolyticus (strain DSM 18924 / JCM 16383 / VKM B-2413 / 1221n) (Desulfurococcus kamchatkensis) protein is D-aminoacyl-tRNA deacylase.